A 260-amino-acid chain; its full sequence is Lipid II isoglutaminyl synthase (glutamine-hydrolyzing) subunit GatD (260 aa).

The region spanning 16-214 is the GATase cobBQ-type domain; that stretch reads QLNIAHLYGN…FHGPILSRNA (199 aa). Catalysis depends on Cys107, which acts as the Nucleophile. Arg142 is a binding site for substrate. The active site involves His206.

The protein belongs to the CobB/CobQ family. GatD subfamily. Forms a heterodimer with MurT.

It carries out the reaction beta-D-GlcNAc-(1-&gt;4)-Mur2Ac(oyl-L-Ala-gamma-D-Glu-L-Lys-D-Ala-D-Ala)-di-trans,octa-cis-undecaprenyl diphosphate + L-glutamine + ATP + H2O = beta-D-GlcNAc-(1-&gt;4)-Mur2Ac(oyl-L-Ala-D-isoglutaminyl-L-Lys-D-Ala-D-Ala)-di-trans,octa-cis-undecaprenyl diphosphate + L-glutamate + ADP + phosphate + H(+). It catalyses the reaction L-glutamine + H2O = L-glutamate + NH4(+). It functions in the pathway cell wall biogenesis; peptidoglycan biosynthesis. In terms of biological role, the lipid II isoglutaminyl synthase complex catalyzes the formation of alpha-D-isoglutamine in the cell wall lipid II stem peptide. The GatD subunit catalyzes the hydrolysis of glutamine to glutamate and ammonia. The resulting ammonia molecule is channeled to the active site of MurT. This chain is Lipid II isoglutaminyl synthase (glutamine-hydrolyzing) subunit GatD, found in Streptococcus pneumoniae (strain ATCC BAA-255 / R6).